A 471-amino-acid polypeptide reads, in one-letter code: Arginine biosynthesis bifunctional protein ArgJ, mitochondrial (471 aa).

Positions 190, 216, 239, 327, 466, and 471 each coordinate substrate. The active-site Nucleophile is the T239.

The protein belongs to the ArgJ family. As to quaternary structure, heterodimer of an alpha and a beta chain. Post-translationally, the alpha and beta chains are autoproteolytically processed from a single precursor protein within the mitochondrion.

It is found in the mitochondrion matrix. It catalyses the reaction N(2)-acetyl-L-ornithine + L-glutamate = N-acetyl-L-glutamate + L-ornithine. The catalysed reaction is L-glutamate + acetyl-CoA = N-acetyl-L-glutamate + CoA + H(+). Its pathway is amino-acid biosynthesis; L-arginine biosynthesis; L-ornithine and N-acetyl-L-glutamate from L-glutamate and N(2)-acetyl-L-ornithine (cyclic): step 1/1. The protein operates within amino-acid biosynthesis; L-arginine biosynthesis; N(2)-acetyl-L-ornithine from L-glutamate: step 1/4. Its function is as follows. Catalyzes two activities which are involved in the cyclic version of arginine biosynthesis: the synthesis of acetylglutamate from glutamate and acetyl-CoA, and of ornithine by transacetylation between acetylornithine and glutamate. The chain is Arginine biosynthesis bifunctional protein ArgJ, mitochondrial from Coprinopsis cinerea (strain Okayama-7 / 130 / ATCC MYA-4618 / FGSC 9003) (Inky cap fungus).